The sequence spans 619 residues: CREB-regulated transcription coactivator 3 (619 aa).

The tract at residues 1-103 (MAASPGSGSA…LVERPSRNRF (103 aa)) is required for interaction with HTLV-1 TAX. Residues Ser4 and Ser62 each carry the phosphoserine modification. The disordered stretch occupies residues 103 to 150 (FHPLHRRSGDKPGRQFDGSAFGANYSSQPLDESWPRQQPPWKDEKHPG). A Phosphothreonine modification is found at Thr160. At Ser162 the chain carries Phosphoserine; by SIK2. Polar residues predominate over residues 165–175 (ALHTSALSTKP). Positions 165–185 (ALHTSALSTKPQDPYGGGGQS) are disordered. Lys232 is covalently cross-linked (Glycyl lysine isopeptide (Lys-Gly) (interchain with G-Cter in SUMO2)). Phosphoserine is present on residues Ser273, Ser329, Ser332, Ser370, Ser391, Ser396, Ser410, and Ser443. The disordered stretch occupies residues 375–431 (STTNLSGPSRRRQPPVSPLTLSPGPEAHQGFSRQLSSTSPLAPYPTSQMVSSDRSQL). Residues 380 to 401 (SGPSRRRQPPVSPLTLSPGPEA) form a required for interaction with PPP2CA and PPP2R1A region. Residues 405–431 (FSRQLSSTSPLAPYPTSQMVSSDRSQL) are compositionally biased toward polar residues.

This sequence belongs to the TORC family. As to quaternary structure, binding, as a tetramer, through its N-terminal region, with the bZIP domain of CREB1 enhances recruitment of TAF4 to the promoter. 'Arg-314' in the bZIP domain of CREB1 is essential for this interaction. Interacts (when phosphorylated at Ser-162 and Se-273) with 14-3-3 proteins. Interacts with YWHAE. Interacts (when phosphorylated at Ser-391) with phosphatase PP2A catalytic subunit PPP2CA and regulatory subunits PPP2R1A and PPP2R2A. Interacts, via the N-terminal with the ankyrin repeats of BCL3, to form a complex with CREB1 on CRE and TxRE responsive elements and represses HTLV-1 LTR-mediated transcription. (Microbial infection) Interacts with HTLV-1 protein Tax; this interaction enhances tax transcriptional activity. Phosphorylation/dephosphorylation states of Ser-273 are required for regulating transduction of CREB activity. CRTCs/TORCs are inactive when phosphorylated, and active when dephosphorylated at this site. May be phosphorylated at Ser-391 by MAPK3/ERK1 and/or MAPK1/ERK2 or by some cyclin-dependent kinases such as CDK1,CDK2 or CDK5. Following adenylyl cyclase activation, dephosphorylated at Ser-162 and Ser-273 resulting in its dissociation from 14-3-3 proteins probably promoting CRTC3 translocation into the nucleus. Predominantly expressed in B and T lymphocytes. Highest levels in lung. Also expressed in brain, colon, heart, kidney, ovary, and prostate. Weak expression in liver, pancreas, muscle, small intestine, spleen and stomach.

It localises to the nucleus. The protein localises to the cytoplasm. Functionally, transcriptional coactivator for CREB1 which activates transcription through both consensus and variant cAMP response element (CRE) sites. Acts as a coactivator, in the SIK/TORC signaling pathway, being active when dephosphorylated and acts independently of CREB1 'Ser-133' phosphorylation. Enhances the interaction of CREB1 with TAF4. Regulates the expression of specific CREB-activated genes such as the steroidogenic gene, StAR. Potent coactivator of PPARGC1A and inducer of mitochondrial biogenesis in muscle cells. Also coactivator for TAX activation of the human T-cell leukemia virus type 1 (HTLV-1) long terminal repeats (LTR). This chain is CREB-regulated transcription coactivator 3 (CRTC3), found in Homo sapiens (Human).